The primary structure comprises 72 residues: Large ribosomal subunit protein bL32 (72 aa).

Belongs to the bacterial ribosomal protein bL32 family.

The polypeptide is Large ribosomal subunit protein bL32 (Dehalococcoides mccartyi (strain ATCC BAA-2100 / JCM 16839 / KCTC 5957 / BAV1)).